We begin with the raw amino-acid sequence, 296 residues long: MIIHPNFDPVAIHLGPLAVRWYGLMYLVGFIAAIVVGRIRLKLPHVAAQGWTAKDIDDMMFYGVLGTVLGGRLGYVLFYKADFYFSHPLDVFKVWEGGMSFHGGFLGVTLAMVLFAWQRKRHWLQVTDFVAPMVPAGLAAGRLGNFINGELWGRVTDPNAPWAMLFPGAMRDDAAWLSKHPALVEKWHLADVFMQYQMLPRHPSQLYEIALEGIALFFVLFFFSRKPRPLGAVSALFLIGYGLARFTVEFAREPDDFLGLLALGLSMGQWLSLPMILAGIALLVWGYRRRPVNAAA.

Helical transmembrane passes span 17–37 (LAVRWYGLMYLVGFIAAIVVG), 59–79 (MMFYGVLGTVLGGRLGYVLFY), 97–117 (GGMSFHGGFLGVTLAMVLFAW), 129–149 (FVAPMVPAGLAAGRLGNFING), 203–223 (PSQLYEIALEGIALFFVLFFF), 230–250 (LGAVSALFLIGYGLARFTVEF), and 265–285 (LSMGQWLSLPMILAGIALLVW). Residue R142 coordinates a 1,2-diacyl-sn-glycero-3-phospho-(1'-sn-glycerol).

Belongs to the Lgt family.

Its subcellular location is the cell inner membrane. It carries out the reaction L-cysteinyl-[prolipoprotein] + a 1,2-diacyl-sn-glycero-3-phospho-(1'-sn-glycerol) = an S-1,2-diacyl-sn-glyceryl-L-cysteinyl-[prolipoprotein] + sn-glycerol 1-phosphate + H(+). The protein operates within protein modification; lipoprotein biosynthesis (diacylglyceryl transfer). Its function is as follows. Catalyzes the transfer of the diacylglyceryl group from phosphatidylglycerol to the sulfhydryl group of the N-terminal cysteine of a prolipoprotein, the first step in the formation of mature lipoproteins. The chain is Phosphatidylglycerol--prolipoprotein diacylglyceryl transferase from Burkholderia ambifaria (strain MC40-6).